A 1322-amino-acid polypeptide reads, in one-letter code: Centrosome-associated protein Alms1a (1322 aa).

Disordered stretches follow at residues 1–26, 53–135, 165–193, 252–442, 464–614, 657–752, 814–844, 856–911, and 1083–1109; these read MRAK…ESSR, TASS…SEVT, SQSA…SVLK, EEPS…NSVY, KHNQ…GSRP, ESST…ASTD, SKSQ…KERP, AEAE…LNQR, and ASAT…SSMM. A compositionally biased stretch (low complexity) spans 53–62; that stretch reads TASSGASGST. A compositionally biased stretch (basic and acidic residues) spans 78-111; sequence MEHESRPESGHRRRTKSSDHRSPDERGEAKEQLR. The segment covering 165–189 has biased composition (polar residues); that stretch reads SQSAEDIRTPTKSPQMQNKKTQTPE. A compositionally biased stretch (low complexity) spans 279 to 292; the sequence is SLNSGMESSLSSNK. A compositionally biased stretch (polar residues) spans 309 to 318; that stretch reads EVSSCQTDCR. Positions 319-330 are enriched in low complexity; that stretch reads SSSQKESTQGSS. Residues 338 to 350 show a composition bias toward polar residues; it reads NFTTEGTQCSYNR. Over residues 354-364 the composition is skewed to acidic residues; that stretch reads EIDSIMEEEES. Basic and acidic residues-rich tracts occupy residues 365–375 and 394–408; these read IDRRKKDDLRI and SRRE…DDSR. The segment covering 409 to 430 has biased composition (low complexity); sequence LNSPNSSRLGSEVSSRVESSRS. 3 stretches are compositionally biased toward basic and acidic residues: residues 464-487, 495-512, and 519-538; these read KHNQ…EQHQ, PKGR…REQQ, and RDQR…EREQ. 2 stretches are compositionally biased toward low complexity: residues 594–605 and 657–669; these read STGVTASTSTTS and ESST…SSSS. Over residues 678-696 the composition is skewed to polar residues; the sequence is GSLQQVAATNTNQSNARSS. A compositionally biased stretch (low complexity) spans 714-735; the sequence is AIGSSSPLPESVSYSGSTSGSG. Composition is skewed to polar residues over residues 737-751 and 822-832; these read VITQ…NAST and TESATAAQIPS. A compositionally biased stretch (pro residues) spans 893-907; that stretch reads LPAPPPTQPPPPPPH. Residues 1092 to 1107 show a composition bias toward low complexity; it reads SAITRSTTTTTNSSSS. The segment at 1115–1322 is interaction with Klp10A; sequence MSVPMGMMNT…ISLNHSMAIM (208 aa). The tract at residues 1190–1309 is ALMS motif; that stretch reads SLQDQLQLAR…FNKRLKSRVA (120 aa).

It belongs to the ALMS1 family. As to quaternary structure, interacts (via C-terminus) with Klp10A. Interacts with SAK. As to expression, expressed in all germlines, including germline stem cells and spermatogonia.

It is found in the cytoplasm. The protein resides in the cytoskeleton. Its subcellular location is the microtubule organizing center. The protein localises to the centrosome. It localises to the centriole. In terms of biological role, in asymmetrically dividing germline stem cells (GSCs), plays a critical role in ensuring centrosome duplication, which is essential for the production of centrosomes and centrioles in all downstream germ cells. Might recruit SAK for daughter centriole duplication. The protein is Centrosome-associated protein Alms1a of Drosophila melanogaster (Fruit fly).